Consider the following 456-residue polypeptide: Arginine biosynthesis bifunctional protein ArgJ, mitochondrial (456 aa).

Residues Thr-184, Lys-213, Thr-224, Glu-311, Asn-451, and Thr-456 each coordinate substrate. Thr-224 (nucleophile) is an active-site residue.

This sequence belongs to the ArgJ family. As to quaternary structure, heterodimer of an alpha and a beta chain. In terms of processing, the alpha and beta chains are autoproteolytically processed from a single precursor protein within the mitochondrion.

The protein resides in the mitochondrion matrix. It carries out the reaction N(2)-acetyl-L-ornithine + L-glutamate = N-acetyl-L-glutamate + L-ornithine. The enzyme catalyses L-glutamate + acetyl-CoA = N-acetyl-L-glutamate + CoA + H(+). The protein operates within amino-acid biosynthesis; L-arginine biosynthesis; L-ornithine and N-acetyl-L-glutamate from L-glutamate and N(2)-acetyl-L-ornithine (cyclic): step 1/1. It participates in amino-acid biosynthesis; L-arginine biosynthesis; N(2)-acetyl-L-ornithine from L-glutamate: step 1/4. Catalyzes two activities which are involved in the cyclic version of arginine biosynthesis: the synthesis of acetylglutamate from glutamate and acetyl-CoA, and of ornithine by transacetylation between acetylornithine and glutamate. In Neosartorya fischeri (strain ATCC 1020 / DSM 3700 / CBS 544.65 / FGSC A1164 / JCM 1740 / NRRL 181 / WB 181) (Aspergillus fischerianus), this protein is Arginine biosynthesis bifunctional protein ArgJ, mitochondrial.